We begin with the raw amino-acid sequence, 702 residues long: MPINKSEKPESCDNVKVVVRCRPLNEREKSMCYKQAVSVDEMRGTITVHKTDSSNEPPKTFTFDTVFGPESKQLDVYNLTARPIIDSVLEGYNGTIFAYGQTGTGKTFTMEGVRAVPELRGIIPNSFAHIFGHIAKAEGDTRFLVRVSYLEIYNEEVRDLLGKDQTQRLEVKERPDVGVYIKDLSAYVVNNADDMDRIMTLGHKNRSVGATNMNEHSSRSHAIFTITIECSEKGIDGNMHVRMGKLHLVDLAGSERQAKTGATGQRLKEATKINLSLSTLGNVISALVDGKSTHVPYRNSKLTRLLQDSLGGNSKTMMCANIGPADYNYDETISTLRYANRAKNIKNKARINEDPKDALLRQFQKEIEELKKKLEEGEEISGSDISGSEEDDDEEGEVGEDGEKRKKRRDQAGKKKVSPDKMIEMQAKIDEERKALETKLDMEEEERNKARAELEKREKDLLKAQQEHQSLLEKLSALEKKVIVGGVDLLAKAEEQEKLLEESNMELEERRKRAEQLRRELEEKEQERLDIEEKYTSLQEEAQGKTKKLKKVWTMLMAAKSEMADLQQEHQREIEGLLENIRQLSRELRLQMLIIDNFIPRDYQEMIENYVHWNEDIGEWQLKCVAYTGNNMRKQTPVPDKKEKDPFEVDLSHVYLAYTEESLRQSLMKLERPRTSKGKARPKTGRRKRSAKPETVIDSLLQ.

Residues 14 to 345 (NVKVVVRCRP…LRYANRAKNI (332 aa)) form the Kinesin motor domain. An ATP-binding site is contributed by 100-107 (GQTGTGKT). Residues 355-593 (PKDALLRQFQ…LSRELRLQML (239 aa)) are a coiled coil. Disordered stretches follow at residues 372-424 (KKLE…KMIE) and 667-702 (LMKL…SLLQ). Residues 376–400 (EGEEISGSDISGSEEDDDEEGEVGE) show a composition bias toward acidic residues. The segment covering 410 to 424 (DQAGKKKVSPDKMIE) has biased composition (basic and acidic residues). The interval 600–702 (PRDYQEMIEN…PETVIDSLLQ (103 aa)) is globular. Basic residues predominate over residues 675 to 690 (TSKGKARPKTGRRKRS). The residue at position 690 (serine 690) is a Phosphoserine.

Belongs to the TRAFAC class myosin-kinesin ATPase superfamily. Kinesin family. Kinesin II subfamily. As to quaternary structure, heterodimer of KIF3A and KIF3B. Interacts with CIMAP3. Interacts with CLN3. Interacts with DCTN1. Interacts with FLCN. Interacts with AP3B1.

It localises to the cytoplasm. It is found in the cytoskeleton. The protein localises to the cell projection. Its subcellular location is the cilium. The protein resides in the microtubule organizing center. It localises to the centrosome. It is found in the centriole. Its function is as follows. Microtubule-based anterograde translocator for membranous organelles. Plus end-directed microtubule sliding activity in vitro. Plays a role in primary cilia formation. Plays a role in centriole cohesion and subdistal appendage organization and function. Regulates the formation of the subdistal appendage via recruitment of DCTN1 to the centriole. Also required for ciliary basal feet formation and microtubule anchoring to mother centriole. The polypeptide is Kinesin-like protein KIF3A (KIF3A) (Macaca fascicularis (Crab-eating macaque)).